The sequence spans 299 residues: Fluorinase (299 aa).

S-adenosyl-L-methionine is bound by residues aspartate 16, 21-23 (DDS), tyrosine 77, serine 158, aspartate 210, asparagine 215, 269-270 (SR), and 277-279 (RNA).

In terms of assembly, homohexamer; dimers of trimer.

The catalysed reaction is fluoride + S-adenosyl-L-methionine = 5'-deoxy-5'-fluoroadenosine + L-methionine. With respect to regulation, competitively inhibited by S-adenosyl-L-homocysteine (AdoHcy) and S-adenosyl-L-homocysteine (SAH). Sinefungin is only weakly inhibitory. Involved in the biosynthesis of fluorometabolites. Catalyzes the formation of a C-F bond by combining S-adenosyl-L-methionine (SAM) and fluoride to generate 5'-fluoro-5'-deoxyadenosine (5'-FDA) and L-methionine. It can also use 2'-deoxyadenosine in place of adenosine as substrate. This Streptantibioticus cattleyicolor (Streptomyces cattleya) protein is Fluorinase.